A 295-amino-acid chain; its full sequence is tRNA dimethylallyltransferase (295 aa).

Glycine 9–serine 16 is an ATP binding site. Residue threonine 11 to serine 16 coordinates substrate. An interaction with substrate tRNA region spans residues aspartate 34–glutamine 37.

It belongs to the IPP transferase family. In terms of assembly, monomer. Mg(2+) is required as a cofactor.

It carries out the reaction adenosine(37) in tRNA + dimethylallyl diphosphate = N(6)-dimethylallyladenosine(37) in tRNA + diphosphate. Its function is as follows. Catalyzes the transfer of a dimethylallyl group onto the adenine at position 37 in tRNAs that read codons beginning with uridine, leading to the formation of N6-(dimethylallyl)adenosine (i(6)A). The protein is tRNA dimethylallyltransferase of Nostoc sp. (strain PCC 7120 / SAG 25.82 / UTEX 2576).